We begin with the raw amino-acid sequence, 130 residues long: Small ribosomal subunit protein uS9 (130 aa).

The protein belongs to the universal ribosomal protein uS9 family.

This chain is Small ribosomal subunit protein uS9, found in Carboxydothermus hydrogenoformans (strain ATCC BAA-161 / DSM 6008 / Z-2901).